Here is a 132-residue protein sequence, read N- to C-terminus: Replication enhancer protein (132 aa).

This sequence belongs to the geminiviridae replication enhancer protein family. In terms of assembly, homooligomer. Interacts with the replication-associated protein (REP). Interacts with host proliferating cell nuclear antigen (PCNA). Interacts with host retinoblastoma-related protein 1 (RBR1), and may thereby deregulate the host cell cycle. Oligomerization and interaction with PCNA are necessary for optimal replication enhancement.

In terms of biological role, increases viral DNA accumulation. Enhances infectivity and symptom expression. This Macroptilium lathyroides (Lima bean) protein is Replication enhancer protein.